The sequence spans 78 residues: Large ribosomal subunit protein bL28 (78 aa).

This sequence belongs to the bacterial ribosomal protein bL28 family.

This chain is Large ribosomal subunit protein bL28, found in Alcanivorax borkumensis (strain ATCC 700651 / DSM 11573 / NCIMB 13689 / SK2).